A 433-amino-acid polypeptide reads, in one-letter code: Cell adhesion molecule 2 (433 aa).

Residues M1 to G24 form the signal peptide. The Extracellular segment spans residues Q25 to H365. Positions P27 to S114 constitute an Ig-like V-type domain. N-linked (GlcNAc...) asparagine glycans are attached at residues N31, N41, and N51. 3 disulfides stabilise this stretch: C44–C104, C146–C203, and C248–C296. 2 Ig-like C2-type domains span residues P127–A217 and P227–I312. 2 N-linked (GlcNAc...) asparagine glycosylation sites follow: N287 and N291. Residues A366–I386 traverse the membrane as a helical segment. Topologically, residues G387–I433 are cytoplasmic.

Belongs to the nectin family.

The protein localises to the membrane. This Xenopus tropicalis (Western clawed frog) protein is Cell adhesion molecule 2 (cadm2).